The following is a 576-amino-acid chain: Putative pentatricopeptide repeat-containing protein At5g47460 (576 aa).

14 PPR repeats span residues 20-53 (SSNSWSTIVPALARFGSIGVLRAAVELINDGEKP), 54-88 (DASPLVHLLRVSGNYGYVSLCRQLHGYVTKHGFVS), 89-119 (NTRLSNSLMRFYKTSDSLEDAHKVFDEMPDP), 120-154 (DVISWNSLVSGYVQSGRFQEGICLFLELHRSDVFP), 155-189 (NEFSFTAALAACARLHLSPLGACIHSKLVKLGLEK), 191-225 (NVVVGNCLIDMYGKCGFMDDAVLVFQHMEEKDTVS), 226-252 (WNAIVASCSRNGKLELGLWFFHQMPNP), 253-287 (DTVTYNELIDAFVKSGDFNNAFQVLSDMPNPNSSS), 288-318 (WNTILTGYVNSEKSGEATEFFTKMHSSGVRF), 319-353 (DEYSLSIVLAAVAALAVVPWGSLIHACAHKLGLDS), 354-384 (RVVVASALIDMYSKCGMLKHAELMFWTMPRK), 385-419 (NLIVWNEMISGYARNGDSIEAIKLFNQLKQERFLK), 421-452 (DRFTFLNLLAVCSHCEVPMEVMLGYFEMMINE), and 458-488 (SVEHCCSLIRAMGQRGEVWQAKQVIQEFGFG). A type E motif region spans residues 493–570 (AWRALLGACS…EVGSSWIDSR (78 aa)).

This sequence belongs to the PPR family. PCMP-E subfamily.

The polypeptide is Putative pentatricopeptide repeat-containing protein At5g47460 (PCMP-E103) (Arabidopsis thaliana (Mouse-ear cress)).